We begin with the raw amino-acid sequence, 160 residues long: Protein-export protein SecB (160 aa).

This sequence belongs to the SecB family. In terms of assembly, homotetramer, a dimer of dimers. One homotetramer interacts with 1 SecA dimer.

The protein resides in the cytoplasm. One of the proteins required for the normal export of preproteins out of the cell cytoplasm. It is a molecular chaperone that binds to a subset of precursor proteins, maintaining them in a translocation-competent state. It also specifically binds to its receptor SecA. The polypeptide is Protein-export protein SecB (Beijerinckia indica subsp. indica (strain ATCC 9039 / DSM 1715 / NCIMB 8712)).